The chain runs to 440 residues: UDP-glucose 6-dehydrogenase YwqF (440 aa).

Residues N2–L19, V11, D30, K35, T121, and E155 contribute to the NAD(+) site. Residues E151–E155, K204, N208, F249–G253, and G257 contribute to the substrate site. The active-site Nucleophile is the C260. K263 contacts NAD(+). K320 serves as a coordination point for substrate. Residue R327 participates in NAD(+) binding.

It belongs to the UDP-glucose/GDP-mannose dehydrogenase family. Phosphorylated on tyrosine residue(s). Phosphorylated by YwqD and dephosphorylated by YwqE in vitro.

The protein localises to the cytoplasm. The catalysed reaction is UDP-alpha-D-glucose + 2 NAD(+) + H2O = UDP-alpha-D-glucuronate + 2 NADH + 3 H(+). The protein operates within nucleotide-sugar biosynthesis; UDP-alpha-D-glucuronate biosynthesis; UDP-alpha-D-glucuronate from UDP-alpha-D-glucose: step 1/1. With respect to regulation, competitively inhibited by UDP-glucose. Activated by phosphorylation, which may increase affinity for NAD(+); inhibited by dephosphorylation. Its function is as follows. Catalyzes the conversion of UDP-glucose into UDP-glucuronate, one of the precursors of teichuronic acid. This Bacillus subtilis (strain 168) protein is UDP-glucose 6-dehydrogenase YwqF (ywqF).